A 490-amino-acid chain; its full sequence is 2,3-bisphosphoglycerate-independent phosphoglycerate mutase (490 aa).

Positions 9 and 59 each coordinate Mn(2+). The active-site Phosphoserine intermediate is the Ser59. Substrate-binding positions include His116, 145 to 146 (RD), Arg175, Arg181, 246 to 249 (RSDR), and Lys319. The Mn(2+) site is built by Asp385, His389, Asp426, His427, and His444.

Belongs to the BPG-independent phosphoglycerate mutase family. In terms of assembly, monomer. Mn(2+) is required as a cofactor.

It catalyses the reaction (2R)-2-phosphoglycerate = (2R)-3-phosphoglycerate. Its pathway is carbohydrate degradation; glycolysis; pyruvate from D-glyceraldehyde 3-phosphate: step 3/5. Catalyzes the interconversion of 2-phosphoglycerate and 3-phosphoglycerate. This is 2,3-bisphosphoglycerate-independent phosphoglycerate mutase from Helicobacter hepaticus (strain ATCC 51449 / 3B1).